We begin with the raw amino-acid sequence, 203 residues long: MKVTALGNTLTGFGQALATTLGVDTTSSSPNCAEMMVVFARGTSEPGNVGLFSGPTFFDALEVMMGAGAVSVQGVEYGASIEGFLQGGDPAGSAAMAGIVEGTVQNCPNAKIVMSGYSQGGQLVHNAAAMLPAATMAKISSLVIFGDPNDGKPIANADPSKVMVVCHPGHNICDGRDLVLVEHLTYSRDAVEAATFAAARAKA.

The signal sequence occupies residues 1 to 18; sequence MKVTALGNTLTGFGQALA. A disulfide bridge links C32 with C107. Residue S118 is the Nucleophile of the active site. C166 and C173 are oxidised to a cystine. Residue H170 is part of the active site. The active-site Proton donor/acceptor is H183.

This sequence belongs to the cutinase family. Post-translationally, the 2 disulfide bonds play a critical role in holding the catalytic residues in juxta-position; reduction of the disulfide bridges results in the complete inactivation of the enzyme.

The protein resides in the secreted. It carries out the reaction cutin + H2O = cutin monomers.. Its function is as follows. Catalyzes the hydrolysis of complex carboxylic polyesters found in the cell wall of plants. Degrades cutin, a macromolecule that forms the structure of the plant cuticle. Allows pathogenic fungi to penetrate through the cuticular barrier into the host plant during the initial stage of fungal infection. The protein is Cutinase pbc1 of Pyrenopeziza brassicae.